A 297-amino-acid polypeptide reads, in one-letter code: MKPQVYHVDAFTSQPFRGNSAGVVFPADNLSEAQMQLIARELGHSETAFLLHSDDSDVRIRYFTPTVEVPICGHATVAAHYVRAKVLGLGNCTIWQTSLAGKHRVTIEKHNDDYRISLEQGTPGFEPPLEGETRAAIINALHLTEDDILPGLPIQVATTGHSKVMIPLKPEVDIDALSPDLNALTAISKKIGCNGFFPFQIRPGKNETDGRMFSPAIGIVEDPVTGNANGPMGAWLVHHNVLPHDGNVLRVKGHQGRALGRDGMIEVTVTIRDNQPEKVTISGTAVILFHAEWAIEL.

Residue Glu46 is part of the active site.

The protein belongs to the PhzF family. As to quaternary structure, homodimer and homotetramer.

This is an uncharacterized protein from Escherichia coli (strain K12).